Consider the following 235-residue polypeptide: Leucyl/phenylalanyl-tRNA--protein transferase (235 aa).

It belongs to the L/F-transferase family.

The protein resides in the cytoplasm. It catalyses the reaction N-terminal L-lysyl-[protein] + L-leucyl-tRNA(Leu) = N-terminal L-leucyl-L-lysyl-[protein] + tRNA(Leu) + H(+). The enzyme catalyses N-terminal L-arginyl-[protein] + L-leucyl-tRNA(Leu) = N-terminal L-leucyl-L-arginyl-[protein] + tRNA(Leu) + H(+). The catalysed reaction is L-phenylalanyl-tRNA(Phe) + an N-terminal L-alpha-aminoacyl-[protein] = an N-terminal L-phenylalanyl-L-alpha-aminoacyl-[protein] + tRNA(Phe). Functionally, functions in the N-end rule pathway of protein degradation where it conjugates Leu, Phe and, less efficiently, Met from aminoacyl-tRNAs to the N-termini of proteins containing an N-terminal arginine or lysine. The chain is Leucyl/phenylalanyl-tRNA--protein transferase from Azoarcus sp. (strain BH72).